The following is a 269-amino-acid chain: Tryptophan synthase alpha chain (269 aa).

Active-site proton acceptor residues include Glu49 and Asp60.

This sequence belongs to the TrpA family. As to quaternary structure, tetramer of two alpha and two beta chains.

The enzyme catalyses (1S,2R)-1-C-(indol-3-yl)glycerol 3-phosphate + L-serine = D-glyceraldehyde 3-phosphate + L-tryptophan + H2O. It participates in amino-acid biosynthesis; L-tryptophan biosynthesis; L-tryptophan from chorismate: step 5/5. Functionally, the alpha subunit is responsible for the aldol cleavage of indoleglycerol phosphate to indole and glyceraldehyde 3-phosphate. This is Tryptophan synthase alpha chain from Actinobacillus pleuropneumoniae serotype 5b (strain L20).